The chain runs to 367 residues: Riboflavin biosynthesis protein RibD (367 aa).

The CMP/dCMP-type deaminase domain maps to 1 to 123 (MQDEYYMARA…RLQQAGIDVS (123 aa)). Residues 1-145 (MQDEYYMARA…KGFLKRMRTG (145 aa)) are deaminase. Position 50 (His-50) interacts with Zn(2+). The Proton donor role is filled by Glu-52. Zn(2+) contacts are provided by Cys-75 and Cys-84. The tract at residues 146–367 (FPYIQLKLGA…PDVCLHLVGA (222 aa)) is reductase. An NADP(+)-binding site is contributed by 161–164 (TAMA). Ser-168 contributes to the substrate binding site. Trp-170 provides a ligand contact to NADP(+). Arg-184 contacts substrate. Thr-196 and Asp-200 together coordinate NADP(+). Leu-204 and Arg-207 together coordinate substrate. Ser-234 serves as a coordination point for NADP(+). Glu-299 lines the substrate pocket. 301–304 (GPTL) contributes to the NADP(+) binding site.

The protein in the N-terminal section; belongs to the cytidine and deoxycytidylate deaminase family. It in the C-terminal section; belongs to the HTP reductase family. In terms of assembly, homodimer. Zn(2+) is required as a cofactor.

The enzyme catalyses 2,5-diamino-6-hydroxy-4-(5-phosphoribosylamino)-pyrimidine + H2O + H(+) = 5-amino-6-(5-phospho-D-ribosylamino)uracil + NH4(+). The catalysed reaction is 5-amino-6-(5-phospho-D-ribitylamino)uracil + NADP(+) = 5-amino-6-(5-phospho-D-ribosylamino)uracil + NADPH + H(+). Its pathway is cofactor biosynthesis; riboflavin biosynthesis; 5-amino-6-(D-ribitylamino)uracil from GTP: step 2/4. It participates in cofactor biosynthesis; riboflavin biosynthesis; 5-amino-6-(D-ribitylamino)uracil from GTP: step 3/4. In terms of biological role, converts 2,5-diamino-6-(ribosylamino)-4(3h)-pyrimidinone 5'-phosphate into 5-amino-6-(ribosylamino)-2,4(1h,3h)-pyrimidinedione 5'-phosphate. The polypeptide is Riboflavin biosynthesis protein RibD (ribD) (Escherichia coli (strain K12)).